The primary structure comprises 451 residues: D-inositol 3-phosphate glycosyltransferase (451 aa).

His-37 is a 1D-myo-inositol 3-phosphate binding site. UDP-N-acetyl-alpha-D-glucosamine contacts are provided by residues 43-44 (QP) and Gly-51. Residues 48–53 (DAGGMN), Lys-106, Tyr-138, Thr-162, and Arg-182 each bind 1D-myo-inositol 3-phosphate. UDP-N-acetyl-alpha-D-glucosamine contacts are provided by Arg-259, Lys-264, and Arg-323. Tyr-332, Arg-333, and Ala-335 together coordinate Mg(2+). UDP-N-acetyl-alpha-D-glucosamine contacts are provided by Glu-345 and Glu-353. Thr-359 provides a ligand contact to Mg(2+).

This sequence belongs to the glycosyltransferase group 1 family. MshA subfamily. As to quaternary structure, homodimer.

The catalysed reaction is 1D-myo-inositol 3-phosphate + UDP-N-acetyl-alpha-D-glucosamine = 1D-myo-inositol 2-acetamido-2-deoxy-alpha-D-glucopyranoside 3-phosphate + UDP + H(+). In terms of biological role, catalyzes the transfer of a N-acetyl-glucosamine moiety to 1D-myo-inositol 3-phosphate to produce 1D-myo-inositol 2-acetamido-2-deoxy-glucopyranoside 3-phosphate in the mycothiol biosynthesis pathway. This is D-inositol 3-phosphate glycosyltransferase from Corynebacterium kroppenstedtii (strain DSM 44385 / JCM 11950 / CIP 105744 / CCUG 35717).